A 171-amino-acid chain; its full sequence is Protein BTG1 (171 aa).

Serine 159 carries the post-translational modification Phosphoserine.

This sequence belongs to the BTG family. As to quaternary structure, interacts with CNOT7 and CNOT8.

Anti-proliferative protein. The protein is Protein BTG1 (BTG1) of Homo sapiens (Human).